The following is a 406-amino-acid chain: Tryptophan synthase beta chain (406 aa).

Position 99 is an N6-(pyridoxal phosphate)lysine (K99).

The protein belongs to the TrpB family. In terms of assembly, tetramer of two alpha and two beta chains. Pyridoxal 5'-phosphate serves as cofactor.

The catalysed reaction is (1S,2R)-1-C-(indol-3-yl)glycerol 3-phosphate + L-serine = D-glyceraldehyde 3-phosphate + L-tryptophan + H2O. The protein operates within amino-acid biosynthesis; L-tryptophan biosynthesis; L-tryptophan from chorismate: step 5/5. Functionally, the beta subunit is responsible for the synthesis of L-tryptophan from indole and L-serine. In Brucella abortus (strain 2308), this protein is Tryptophan synthase beta chain.